We begin with the raw amino-acid sequence, 208 residues long: MERGNVWRSGRAEIETKAAFGSVKEAVAMFGEKVLAGEIYATRLREIRTKETNSTPSSLSRLPSLTLELEQTKQTLTRTLQLNTSLSNRIKTLTQELELGKKEIQRLSRTRSSRLDNPEIEELKFVEQHQTMTSNDFEEEVVTTEELEKRRLVTFASSPLLTRVMSSVGDEEERNKKEKDFERDCSVKKTKLKKGFAPFMGWFRATRG.

Residues 78 to 113 adopt a coiled-coil conformation; the sequence is RTLQLNTSLSNRIKTLTQELELGKKEIQRLSRTRSS.

Belongs to the WEB family.

The sequence is that of WEB family protein At2g17940 from Arabidopsis thaliana (Mouse-ear cress).